Here is a 427-residue protein sequence, read N- to C-terminus: GTPase Obg (427 aa).

Positions 1 to 158 (MFIDKAKIHL…LTVTLELKLI (158 aa)) constitute an Obg domain. The OBG-type G domain occupies 159-330 (ADVGLVGFPN…LLDYVSIKLK (172 aa)). GTP-binding positions include 165–172 (GFPNVGKS), 190–194 (FTTLT), 212–215 (DIPG), 282–285 (NKTD), and 311–313 (SAA). Residues serine 172 and threonine 192 each coordinate Mg(2+). Positions 347 to 427 (LYELKEKDTN…IYDVEFEYFH (81 aa)) constitute an OCT domain.

Belongs to the TRAFAC class OBG-HflX-like GTPase superfamily. OBG GTPase family. As to quaternary structure, monomer. The cofactor is Mg(2+).

The protein localises to the cytoplasm. In terms of biological role, an essential GTPase which binds GTP, GDP and possibly (p)ppGpp with moderate affinity, with high nucleotide exchange rates and a fairly low GTP hydrolysis rate. Plays a role in control of the cell cycle, stress response, ribosome biogenesis and in those bacteria that undergo differentiation, in morphogenesis control. The protein is GTPase Obg of Alkaliphilus metalliredigens (strain QYMF).